A 1089-amino-acid chain; its full sequence is MEVTSTTFISTTRSSKYLTLTSYSPVILPASTLRRDFLGCCHSLRPSPHLRTRAGKRNSRRSSIRSPRLVVRASIDSGLILIVVAVTAFSAIAFAYCQSTFRKRKSSDEVATVHGGKNSAENRREIHGDIHEGNPVEINVGFRKVEEESVNLLEEEKAHQIHEVAVMDYDSVSAEDSQFAVASVTTVATAHTLIDESFSSSIVNGSVALESATFGVKTPEKQVGNSEDQKGLEHDFSQAVVGIHSIASPQVVDDTRALEYEYNGLLQKPLEYSIFAESKREEIHTFYGSNHSSAKSSRLPSLKAVSPAVTSATNSLFLDHKNNGVIDTQFPGQSSGQATGDVQEENLVAHSNGGVSHIRKDVKGDWKFPSDGKHVGHQIDESMPQFPARNFELHNSNGRSPETSDAYNRLLRDGRIKDCISLLEDLDQRDLLDMDKIYHASFFKACKKQRAVKEAFRFTKLILNPTMSTFNMLMSVCASSQDIEGARGVLRLVQESGMTADCKLYTTLISSCAKSGKVDAMFEVFHQMSNSGVEANLHTFGALIDGCARAGQVAKAFGAYGILRSKNVKPDRVVFNALISACGQSGAVDRAFDVLAEMKAETHPIDPDHISIGALMKACCNAGQVERAKEVYQMIHKYGIRGTPEVYTIAVNSCSKSGDWDFACSIYKDMKEKDVTPDEVFFSALIDVAGHAKMLDEAFGILQDAKSQGIRLGTISYSSLMGACCNAKDWKKALELYEKIKSIKLRPTISTMNALITALCEGNQLPKAMEYLDEIKTLGLKPNTITYSMLMLASERKDDFEVSFKLLSQAKGDGVSPNLIMCRCITSLCKRRFEKACAGGEPVVSFKSGRPQIENKWTSMALMVYRETISGGTVPTTEVVSQVLGCLQLPHDAALRDRLISTLGINISSQKQHNIFPLVDGFGEYDPRAFSLLEEATSLGVLPSVSFNKIPLFFDTTELPKNVAEVYLLTIFKGLKHRLAAGAKIPHINLIISIQEKEIRTPEGEKTIDLTGRVGQEIGALLRRLDIPYHRKDSRLRINGVSLKNWFQPKLDSPFSGGKPGDLRSSQVPLGNQISRQQRSIRLGNLSLE.

Residues Met-1 to Arg-72 constitute a chloroplast transit peptide. 10 PPR repeats span residues Thr-466–Ala-500, Asp-501–Ala-535, Asn-536–Pro-570, Asp-571–Ile-605, Asp-608–Gly-642, Thr-643–Pro-677, Asp-678–Leu-712, Gly-713–Pro-747, Thr-748–Pro-782, and Asn-783–Pro-817.

This sequence belongs to the PPR family. P subfamily. In terms of tissue distribution, expressed in stems, leaves and sepals.

Its subcellular location is the plastid. It is found in the chloroplast. Its function is as follows. Regulator of the large subunit (LS) of RuBisCO. Involved either in the processing or in the stabilization of the processed transcript, probably by acting as a barrier to the 5'&gt;3' degradation. The chain is Pentatricopeptide repeat-containing protein MRL1, chloroplastic (MRL1) from Arabidopsis thaliana (Mouse-ear cress).